We begin with the raw amino-acid sequence, 384 residues long: MSSVPAPREYFLDSIRAWLMLLGIPFHISLIYSTHSWHVNSAAPSWWLTLFNDFIHAFRMQVFFVISGYFSYMLFLRYPLKHWWKVRVERVGIPMLTAIPLLTLPQFILLQYVKEKTENWPTLSAYEKYNTLAWELISHLWFLLVLVILTTVSIGIFTWFQKRQETSKPRPAAISLAKLSLIFFLLGVAYAAIRRIIFIVYPAILSDGMFNFIVMQTLFYVPFFILGALAFIHPDLKARFTTPSRGCTLGAAVAFIAYLLNQRYGSGDAWMYETESVITMVMGLWMVNVVFSLGHRLLNFQSARVTYFVNASLFIYLVHHPLTLFFGAYITPHISSNLIGFLCGLIFVMGIALILYEIHLRIPLLKFLFSGKPPVKQESRAAIG.

A run of 10 helical transmembrane segments spans residues 17–37, 54–74, 91–111, 140–160, 173–193, 212–232, 240–260, 274–294, 311–331, and 338–358; these read AWLMLLGIPFHISLIYSTHSW, FIHAFRMQVFFVISGYFSYML, VGIPMLTAIPLLTLPQFILLQ, LWFLLVLVILTTVSIGIFTWF, AISLAKLSLIFFLLGVAYAAI, FIVMQTLFYVPFFILGALAFI, FTTPSRGCTLGAAVAFIAYLL, TESVITMVMGLWMVNVVFSLG, ASLFIYLVHHPLTLFFGAYIT, and LIGFLCGLIFVMGIALILYEI.

This sequence belongs to the acyltransferase 3 family. OpgC subfamily.

The protein localises to the cell membrane. It participates in glycan metabolism; osmoregulated periplasmic glucan (OPG) biosynthesis. Its function is as follows. Necessary for the succinyl substitution of periplasmic glucans. Could catalyze the transfer of succinyl residues from the cytoplasmic side of the membrane to the nascent glucan backbones on the periplasmic side of the membrane. In Salmonella typhi, this protein is Glucans biosynthesis protein C.